The sequence spans 166 residues: Small ribosomal subunit protein uS5 (166 aa).

Positions 12–75 (YIEKLVQVNR…EAARRNMIQV (64 aa)) constitute an S5 DRBM domain.

Belongs to the universal ribosomal protein uS5 family. In terms of assembly, part of the 30S ribosomal subunit. Contacts proteins S4 and S8.

With S4 and S12 plays an important role in translational accuracy. In terms of biological role, located at the back of the 30S subunit body where it stabilizes the conformation of the head with respect to the body. The sequence is that of Small ribosomal subunit protein uS5 from Pseudomonas entomophila (strain L48).